The following is a 280-amino-acid chain: uncharacterized protein (280 aa).

Disordered regions lie at residues 1 to 83 and 248 to 280; these read MELK…EEEQ and IRHR…EARL. Over residues 12–25 the composition is skewed to polar residues; that stretch reads SAKTDNHTVYQNSP. Basic and acidic residues-rich tracts occupy residues 41 to 71 and 249 to 280; these read KQTR…RVDD and RHRE…EARL.

Belongs to the chlamydial CPn_0705/CT_671/TC_0042 family.

This is an uncharacterized protein from Chlamydia pneumoniae (Chlamydophila pneumoniae).